The chain runs to 268 residues: Bidirectional sugar transporter N3 (268 aa).

The Extracellular portion of the chain corresponds to 1–7; the sequence is MAISHNT. Residues 8–28 traverse the membrane as a helical segment; it reads LAFTFGMLGNVISFLVFLAPI. The MtN3/slv 1 domain maps to 10 to 96; sequence FTFGMLGNVI…ILYIIYAPRD (87 aa). The Cytoplasmic segment spans residues 29–42; the sequence is STFYRIYKKKSTEG. Residues 43–63 traverse the membrane as a helical segment; the sequence is FQSLPYLVALFSSMLWLYYAL. Residues 64–70 are Extracellular-facing; it reads LKKDAFL. Residues 71–91 form a helical membrane-spanning segment; that stretch reads LITINSFGCVVETIYIILYII. The Cytoplasmic portion of the chain corresponds to 92–103; the sequence is YAPRDARNLTFK. Residues 104–124 traverse the membrane as a helical segment; sequence LLSAMNVGSFALILIVTNYAV. Over 125 to 131 the chain is Extracellular; it reads HGPLRVQ. The region spanning 131-214 is the MtN3/slv 2 domain; that stretch reads QVLGWVCVSL…QMLLYAIYRN (84 aa). The chain crosses the membrane as a helical span at residues 132–152; it reads VLGWVCVSLSVSVFAAPLSIV. The Cytoplasmic portion of the chain corresponds to 153–165; it reads AQVVRTKSVEFMP. Residues 166-186 traverse the membrane as a helical segment; it reads FNLSFTLTLSATMWFGYGFFL. Residues 187–190 are Extracellular-facing; sequence KDIC. Residues 191–211 traverse the membrane as a helical segment; it reads IXLPNVLGXVLGLLQMLLYAI. Over 212–268 the chain is Cytoplasmic; the sequence is YRNGGEKAMKKEKKAPIEPPKSIVIETQLEKIEQEKKNKDDDNEEKDKSEEPIGCGV. A coiled-coil region spans residues 234–262; that stretch reads IVIETQLEKIEQEKKNKDDDNEEKDKSEE. Residues 243–262 are compositionally biased toward basic and acidic residues; that stretch reads IEQEKKNKDDDNEEKDKSEE. Residues 243 to 268 form a disordered region; sequence IEQEKKNKDDDNEEKDKSEEPIGCGV.

It belongs to the SWEET sugar transporter family. As to quaternary structure, forms homooligomers and/or heterooligomers.

It localises to the cell membrane. Functionally, mediates both low-affinity uptake and efflux of sugar across the plasma membrane. The protein is Bidirectional sugar transporter N3 (N3) of Medicago truncatula (Barrel medic).